The sequence spans 423 residues: Serine--tRNA ligase (423 aa).

230 to 232 is a binding site for L-serine; sequence TAE. 261–263 contacts ATP; that stretch reads RAE. Glu284 serves as a coordination point for L-serine. 348–351 contributes to the ATP binding site; sequence EISS. Residue Ser384 participates in L-serine binding.

This sequence belongs to the class-II aminoacyl-tRNA synthetase family. Type-1 seryl-tRNA synthetase subfamily. In terms of assembly, homodimer. The tRNA molecule binds across the dimer.

The protein localises to the cytoplasm. It catalyses the reaction tRNA(Ser) + L-serine + ATP = L-seryl-tRNA(Ser) + AMP + diphosphate + H(+). The catalysed reaction is tRNA(Sec) + L-serine + ATP = L-seryl-tRNA(Sec) + AMP + diphosphate + H(+). The protein operates within aminoacyl-tRNA biosynthesis; selenocysteinyl-tRNA(Sec) biosynthesis; L-seryl-tRNA(Sec) from L-serine and tRNA(Sec): step 1/1. Catalyzes the attachment of serine to tRNA(Ser). Is also able to aminoacylate tRNA(Sec) with serine, to form the misacylated tRNA L-seryl-tRNA(Sec), which will be further converted into selenocysteinyl-tRNA(Sec). The chain is Serine--tRNA ligase from Acetivibrio thermocellus (strain ATCC 27405 / DSM 1237 / JCM 9322 / NBRC 103400 / NCIMB 10682 / NRRL B-4536 / VPI 7372) (Clostridium thermocellum).